Consider the following 318-residue polypeptide: Myoblast determination protein 1 (318 aa).

Met-1 is covalently cross-linked (Peptide (Met-Gly) (interchain with G-Cter in ubiquitin)). Lys-104 carries the N6-methyllysine; by EHMT2 modification. The bHLH domain maps to 109 to 160 (DRRKAATMRERRRLSKVNEAFETLKRCTSSNPNQRLPKVEILRNAIRYIEGL). Disordered regions lie at residues 175-225 (AAFY…QNGY) and 265-318 (APAL…YQVL). Positions 196–206 (SDASSPRSNCS) are enriched in polar residues. Residues 265-274 (APALLLADAP) show a composition bias toward low complexity. Composition is skewed to polar residues over residues 287-298 (LSDTEQGTQTPS) and 307-318 (AGSNPNAIYQVL).

As to quaternary structure, interacts with SUV39H1. Efficient DNA binding requires dimerization with another bHLH protein. Seems to form active heterodimers with ITF-2. Interacts with DDX5. Interacts with CHD2. Interacts with TSC22D3 isoform 1 and isoform 4. Interacts with SETD3. Interacts with P-TEFB complex; promotes the transcriptional activity of MYOD1 through its CDK9-mediated phosphorylation. Interacts with CSRP3. Interacts with NUPR1. In terms of processing, acetylated by a complex containing EP300 and PCAF. The acetylation is essential to activate target genes. Conversely, its deacetylation by SIRT1 inhibits its function. Ubiquitinated on the N-terminus; which is required for proteasomal degradation. Post-translationally, phosphorylated by CDK9. This phosphorylation promotes its function in muscle differentiation. In terms of processing, methylation at Lys-104 by EHMT2/G9a inhibits myogenic activity.

It is found in the nucleus. Functionally, acts as a transcriptional activator that promotes transcription of muscle-specific target genes and plays a role in muscle differentiation. Together with MYF5 and MYOG, co-occupies muscle-specific gene promoter core region during myogenesis. Induces fibroblasts to differentiate into myoblasts. Interacts with and is inhibited by the twist protein. This interaction probably involves the basic domains of both proteins. This chain is Myoblast determination protein 1 (Myod1), found in Mus musculus (Mouse).